Here is a 104-residue protein sequence, read N- to C-terminus: MNNTEFHQLVDNELQLIEEAIDESGADIDYETTGNVMTLEFDDRSQIIINRQEPMQEIWLASKSGGFHFQYKAGQWICSKTGVEFAHMVKQECEKHAGESIDWA.

It belongs to the frataxin family.

In terms of biological role, involved in iron-sulfur (Fe-S) cluster assembly. May act as a regulator of Fe-S biogenesis. The protein is Iron-sulfur cluster assembly protein CyaY of Vibrio vulnificus (strain CMCP6).